The following is an 84-amino-acid chain: Large ribosomal subunit protein bL27 (84 aa).

Positions 1-21 (MAHKKGAGSTKNGRDSKPKML) are disordered.

Belongs to the bacterial ribosomal protein bL27 family.

The polypeptide is Large ribosomal subunit protein bL27 (Dehalococcoides mccartyi (strain ATCC BAA-2100 / JCM 16839 / KCTC 5957 / BAV1)).